A 673-amino-acid chain; its full sequence is Sodium/myo-inositol cotransporter 2 (673 aa).

At 1–27 (MESTTSSPQPPPSDALEAFPQKSMEPA) the chain is on the extracellular side. Residues 28–48 (DIVVLVLYFLFVLAVGLWSTV) traverse the membrane as a helical segment. Residues 49–56 (RTKRDTVK) are Cytoplasmic-facing. A helical transmembrane segment spans residues 57 to 77 (GYFLAGGDMVWWPVGASLFAS). A topological domain (extracellular) is located at residue Asn78. Residues 79–99 (VGSGHFIGLAGSGAAVGISVA) traverse the membrane as a helical segment. The Cytoplasmic portion of the chain corresponds to 100-102 (AYE). The chain crosses the membrane as a helical span at residues 103–123 (LNGLFSVLMLAWIFLPIYIAG). Over 124–180 (QVTTMPEYLKRRFGGSRIPITLASIYPSTHSLTILQVDMYAGAIFIQQSLHLDLYLA) the chain is Extracellular. The chain crosses the membrane as a helical span at residues 181 to 201 (IVGLLAVTALYTVAGGLAAVI). Over 202 to 208 (YTDALQT) the chain is Cytoplasmic. The helical transmembrane segment at 209 to 229 (VIMLIGAFILMGYSFAAVGGM) threads the bilayer. The Extracellular segment spans residues 230–272 (EGLKDQYFLALASNRSENSSCGLPREDAFHIFRDPLTSDLPWP). Residues 273–293 (GILFGMSIPSLWYWCTDQVIV) form a helical membrane-spanning segment. Topologically, residues 294–308 (QRSLAAKNLSHAKGG) are cytoplasmic. Residues 309-329 (SLMAAYLKVLPLFLMVFPGMV) form a helical membrane-spanning segment. The Extracellular segment spans residues 330-375 (SRILFPDQVACAHPDICQRVCSNPSGCSDIAYPKLVLELLPTGLRG). Residues 376–396 (LMMAVMVAALMSSLTSIFNSA) form a helical membrane-spanning segment. The Cytoplasmic portion of the chain corresponds to 397-418 (STIFTMDLWHHIRPRASERELM). Residues 419 to 439 (IVGRVFVLALVLVSILWIPVV) form a helical membrane-spanning segment. At 440-446 (QASQGGQ) the chain is on the extracellular side. The helical transmembrane segment at 447–467 (LFIYIQSISSYLQPPVAVVFI) threads the bilayer. Residues 468–479 (MGCFWKRTNEKG) are Cytoplasmic-facing. The helical transmembrane segment at 480-500 (AFSGLILGLLLGLVRLILDFV) threads the bilayer. The Extracellular segment spans residues 501-521 (YVQPRCDQPDDRPAVVKDVHY). Residues 522-542 (LYFSMILSSTTLITVFTVSWF) traverse the membrane as a helical segment. The Cytoplasmic portion of the chain corresponds to 543–652 (TETPSKEMVS…SLEENPLVKT (110 aa)). Residues 653-673 (LLDVNCIVCISCAIFLWGYFA) traverse the membrane as a helical segment.

Belongs to the sodium:solute symporter (SSF) (TC 2.A.21) family. In terms of tissue distribution, expressed in kidney and small intestine.

It is found in the membrane. The protein resides in the apical cell membrane. It carries out the reaction myo-inositol(out) + 2 Na(+)(out) = myo-inositol(in) + 2 Na(+)(in). It catalyses the reaction 1D-chiro-inositol(out) + 2 Na(+)(out) = 1D-chiro-inositol(in) + 2 Na(+)(in). The catalysed reaction is D-glucose(out) + 2 Na(+)(out) = D-glucose(in) + 2 Na(+)(in). The enzyme catalyses D-xylose(out) + 2 Na(+)(out) = D-xylose(in) + 2 Na(+)(in). Its activity is regulated as follows. MI transport activity inhibited by D-chiro-inositol (DCI), phlorizin (Pz) and sodium (Na(+)). Insulin increases D-chiro-inositol uptake. In terms of biological role, involved in the sodium-dependent cotransport of myo-inositol (MI) with a Na(+):MI stoichiometry of 2:1. Exclusively responsible for apical MI transport and absorption in intestine. Can also transport D-chiro-inositol (DCI) but not L-fucose. Exhibits stereospecific cotransport of both D-glucose and D-xylose. May induce apoptosis through the TNF-alpha, PDCD1 pathway. May play a role in the regulation of MI concentration in serum, involving reabsorption in at least the proximal tubule of the kidney. The polypeptide is Sodium/myo-inositol cotransporter 2 (Rattus norvegicus (Rat)).